A 268-amino-acid polypeptide reads, in one-letter code: Ubiquinone biosynthesis protein COQ4 homolog 1, mitochondrial (268 aa).

Basic residues predominate over residues 1–10; that stretch reads MFLRRVHPVR. The transit peptide at 1 to 18 directs the protein to the mitochondrion; that stretch reads MFLRRVHPVRLGHASQRS. The tract at residues 1-44 is disordered; the sequence is MFLRRVHPVRLGHASQRSLTTTKSRNESTTTTVEAPQAAPSPPP. Residues 20-38 show a composition bias toward low complexity; it reads TTTKSRNESTTTTVEAPQA. Zn(2+) is bound by residues H177, D178, H181, and E193.

Belongs to the COQ4 family. Component of a multi-subunit COQ enzyme complex. It depends on Zn(2+) as a cofactor.

It localises to the mitochondrion inner membrane. The enzyme catalyses a 4-hydroxy-3-methoxy-5-(all-trans-polyprenyl)benzoate + H(+) = a 2-methoxy-6-(all-trans-polyprenyl)phenol + CO2. It participates in cofactor biosynthesis; ubiquinone biosynthesis. In terms of biological role, lyase that catalyzes the C1-decarboxylation of 4-hydroxy-3-methoxy-5-(all-trans-polyprenyl)benzoic acid into 2-methoxy-6-(all-trans-polyprenyl)phenol during ubiquinone biosynthesis. In Culex quinquefasciatus (Southern house mosquito), this protein is Ubiquinone biosynthesis protein COQ4 homolog 1, mitochondrial.